The sequence spans 1194 residues: MKCFFPVLSCLAVLGVVSAQRQVTVQEGPLYRTEGSHITIWCNVSGYQGPSEQNFQWSIYLPSSPEREVQIVSTMDSSFPYAIYTQRVRGGKIFIERVQGNSTLLHITDLQARDAGEYECHTPSTDKQYFGSYSAKMNLVVIPDSLQTTAMPQTLHRVEQDPLELTCEVASETIQHSHLSVAWLRQKVGEKPVEVISLSRDFMLHSSSEYAQRQSLGEVRLDKLGRTTFRLTIFHLQPSDQGEFYCEAAEWIQDPDGSWYAMTRKRSEGAVVNVQPTDKEFTVRLETEKRLHTVGEPVEFRCILEAQNVPDRYFAVSWAFNSSLIATMGPNAVPVLNSEFAHREARGQLKVAKESDSVFVLKIYHLRQEDSGKYNCRVTEREKTVTGEFIDKESKRPKNIPIIVLPLKSSISVEVASNASVILEGEDLRFSCSVRTAGRPQGRFSVIWQLVDRQNRRSNIMWLDRDGTVQPGSSYWERSSFGGVQMEQVQPNSFSLGIFNSRKEDEGQYECHVTEWVRAVDGEWQIVGERRASTPISITALEMGFAVTAISRTPGVTYSDSFDLQCIIKPHYPAWVPVSVTWRFQPVGTVEFHDLVTFTRDGGVQWGDRSSSFRTRTAIEKAESSNNVRLSISRASDTEAGKYQCVAELWRKNYNNTWTRLAERTSNLLEIRVLQPVTKLQVSKSKRTLTLVENKPIQLNCSVKSQTSQNSHFAVLWYVHKPSDADGKLILKTTHNSAFEYGTYAEEEGLRARLQFERHVSGGLFSLTVQRAEVSDSGSYYCHVEEWLLSPNYAWYKLAEEVSGRTEVTVKQPDSRLRLSQAQGNLSVLETRQVQLECVVLNRTSITSQLMVEWFVWKPNHPERETVARLSRDATFHYGEQAAKNNLKGRLHLESPSPGVYRLFIQNVAVQDSGTYSCHVEEWLPSPSGMWYKRAEDTAGQTALTVMRPDASLQVDTVVPNATVSEKAAFQLDCSIVSRSSQDSRFAVAWYSLRTKAGGKRSSPGLEEQEEEREEEEEEDDDDDDDPTERTALLSVGPDAVFGPEGSPWEGRLRFQRLSPVLYRLTVLQASPQDTGNYSCHVEEWLPSPQKEWYRLTEEESAPIGIRVLDTSPTLQSIICSNDALFYFVFFYPFPIFGILIITILLVRFKSRNSSKNSDGKNGVPLLWIKEPHLNYSPTCLEPPVLSIHPGAID.

An N-terminal signal peptide occupies residues 1–19 (MKCFFPVLSCLAVLGVVSA). 8 consecutive Ig-like C2-type domains span residues 20–138 (QRQV…AKMN), 143–262 (PDSL…WYAM), 276–386 (PTDK…KTVT), 401–539 (PIIV…ISIT), 545–661 (FAVT…WTRL), 676–803 (PVTK…EEVS), 813–945 (PDSR…TALT), and 949–1097 (PDAS…YRLT). Residues 20–1124 (QRQVTVQEGP…LQSIICSNDA (1105 aa)) lie on the Extracellular side of the membrane. 2 disulfides stabilise this stretch: cysteine 42–cysteine 120 and cysteine 167–cysteine 246. The N-linked (GlcNAc...) asparagine glycan is linked to asparagine 43. Positions 250 to 252 (EWI) match the EWI motif motif. The cysteines at positions 302 and 376 are disulfide-linked. A glycan (N-linked (GlcNAc...) asparagine) is linked at asparagine 418. 2 disulfides stabilise this stretch: cysteine 432–cysteine 511 and cysteine 566–cysteine 645. Residue asparagine 655 is glycosylated (N-linked (GlcNAc...) asparagine). Intrachain disulfides connect cysteine 701–cysteine 782, cysteine 838–cysteine 918, and cysteine 974–cysteine 1080. Asparagine 842 is a glycosylation site (N-linked (GlcNAc...) asparagine). A disordered region spans residues 997-1033 (AGGKRSSPGLEEQEEEREEEEEEDDDDDDDPTERTAL). The segment covering 1007–1027 (EEQEEEREEEEEEDDDDDDDP) has biased composition (acidic residues). A glycan (N-linked (GlcNAc...) asparagine) is linked at asparagine 1077. Residues 1125–1145 (LFYFVFFYPFPIFGILIITIL) traverse the membrane as a helical segment. Topologically, residues 1146–1194 (LVRFKSRNSSKNSDGKNGVPLLWIKEPHLNYSPTCLEPPVLSIHPGAID) are cytoplasmic.

Expressed in a wide range of tissues with High expression in Placenta, kidney and lung.

Its subcellular location is the membrane. The protein is Immunoglobulin superfamily member 3 (IGSF3) of Homo sapiens (Human).